Here is an 853-residue protein sequence, read N- to C-terminus: MSTIENFDAHTPMMQQYLKLKAQHPEILLFYRMGDFYELFYDDAKRASQLLDISLTKRGASAGEPIPMAGIPYHAVENYLAKLVNQGESVAICEQIGDPATSKGPVERKVVRIVTPGTISDEALLQERQDNLLAAIWQDSKGFGYATLDISSGRFRLSEPADRETMAAELQRTNPAELLYAEDFAEMSLIEGRRGLRRRPLWEFEIDTARQQLNLQFGTRDLVGFGVENAPRGLCAAGCLLQYAKDTQRTTLPHIRSITMERQQDSIIMDAATRRNLEITQNLAGGAENTLASVLDCTVTPMGSRMLKRWLHMPVRDTRVLLERQQTIGALQDFTAELQPVLRQVGDLERILARLALRTARPRDLARMRHAFQQLPELRAQLENVDSAPVQALREKMGEFAELRDLLERAIIDTPPVLVRDGGVIASGYNEELDEWRALADGATDYLERLEVRERERTGLDTLKVGFNAVHGYYIQISRGQSHLAPINYMRRQTLKNAERYIIPELKEYEDKVLTSKGKALALEKQLYEELFDLLLPHLEALQQSASALAELDVLVNLAERAYTLNYTCPTFIDKPGIRITEGRHPVVEQVLNEPFIANPLNLSPQRRMLIITGPNMGGKSTYMRQTALIALMAYIGSYVPAQKVEIGPIDRIFTRVGAADDLASGRSTFMVEMTETANILHNATEYSLVLMDEIGRGTSTYDGLSLAWACAENLANKIKALTLFATHYFELTQLPEKMEGVANVHLDALEHGDTIAFMHSVQDGAASKSYGLAVAALAGVPKEVIKRARQKLRELESISPNAAATQVDGTQMSLLSVPEETSPAVEALENLDPDSLTPRQALEWIYRLKSLV.

614–621 (GPNMGGKS) lines the ATP pocket.

The protein belongs to the DNA mismatch repair MutS family.

This protein is involved in the repair of mismatches in DNA. It is possible that it carries out the mismatch recognition step. This protein has a weak ATPase activity. The protein is DNA mismatch repair protein MutS of Escherichia coli O6:H1 (strain CFT073 / ATCC 700928 / UPEC).